The primary structure comprises 365 residues: 2-aminoethylphosphonate--pyruvate transaminase (365 aa).

K194 carries the N6-(pyridoxal phosphate)lysine modification.

Belongs to the class-V pyridoxal-phosphate-dependent aminotransferase family. PhnW subfamily. In terms of assembly, homodimer. It depends on pyridoxal 5'-phosphate as a cofactor.

The enzyme catalyses (2-aminoethyl)phosphonate + pyruvate = phosphonoacetaldehyde + L-alanine. In terms of biological role, involved in phosphonate degradation. This chain is 2-aminoethylphosphonate--pyruvate transaminase, found in Bacillus thuringiensis (strain Al Hakam).